The following is a 127-amino-acid chain: Copper resistance protein C (127 aa).

A signal peptide spans 1-25 (MFAFRSIATTVVMVAASLASASAFA). 6 residues coordinate Cu cation: His26, Met65, Met68, Met71, Met76, and His116.

The protein belongs to the CopC family.

Its subcellular location is the periplasm. Copper-binding protein involved in copper resistance. The chain is Copper resistance protein C from Xanthomonas campestris pv. juglandis (Xanthomonas arboricola pv. juglandis).